The chain runs to 106 residues: UPF0145 protein FTL_1249 (106 aa).

The protein belongs to the UPF0145 family.

The chain is UPF0145 protein FTL_1249 from Francisella tularensis subsp. holarctica (strain LVS).